A 483-amino-acid chain; its full sequence is Zinc metalloproteinase/disintegrin (483 aa).

The first 20 residues, 1–20, serve as a signal peptide directing secretion; it reads MIQVLLVTVCLAVFPYQGSS. A propeptide spanning residues 21-190 is cleaved from the precursor; sequence IILESGNVND…KASQLYLTPE (170 aa). Residues 197-395 enclose the Peptidase M12B domain; sequence RYVKLAIVVD…YKPQCILNAP (199 aa). Disulfide bonds link Cys-308–Cys-390, Cys-352–Cys-374, and Cys-354–Cys-357. A Zn(2+)-binding site is contributed by His-333. The active site involves Glu-334. Residues His-337 and His-343 each coordinate Zn(2+). A propeptide spanning residues 396-411 is cleaved from the precursor; the sequence is LRTDTVSTPVSGNELL. Positions 403 to 483 constitute a Disintegrin domain; that stretch reads TPVSGNELLE…SDDCPRWNDL (81 aa). 6 disulfide bridges follow: Cys-417-Cys-432, Cys-419-Cys-427, Cys-426-Cys-449, Cys-440-Cys-446, Cys-445-Cys-470, and Cys-458-Cys-477. A Cell attachment site motif is present at residues 462–464; sequence RGD.

The protein belongs to the venom metalloproteinase (M12B) family. P-II subfamily. P-IIa sub-subfamily. As to quaternary structure, monomer. Zn(2+) is required as a cofactor. In terms of tissue distribution, expressed by the venom gland.

The protein resides in the secreted. Functionally, impairs hemostasis in the envenomed animal. Its function is as follows. Inhibits ADP- and collagen-induced human platelet aggregation with IC(50) of 123 and 135 nM, respectively. Inhibits sperm-egg binding in a concentration-dependent manner, but has no effect on the fusion of sperm-egg. The protein is Zinc metalloproteinase/disintegrin of Protobothrops jerdonii (Jerdon's pitviper).